The chain runs to 756 residues: MSPQKRVKNVQAQNRTSQGSSSFQTTLSAWKVKQDPSNSKNISKHGQNNPVGDYEHADDQAEEDALQMAVGYFEKGPIKASQNKDKTLEKHLKTVENVAWKNGLASEEIDILLNIALSGKFGNAVNTRILKCMIPATVISEDSVVKAVSWLCVGKCSGSTKVLFYRWLVAMFDFIDRKEQINLLYGFFFASLQDDALCPYVCHLLYLLTKKENVKPFRVRKLLDLQAKMGMQPHLQALLSLYKFFAPALISVSLPVRKKIYFKNSENLWKTALLAVKQRNRGPSPEPLKLMLGPANVRPLKRKWNSLSVIPVLNSSSYTKECGKKEMSLSDCLNRSGSFPLEQLQSFPQLLQNIHCLELPSQMGSVLNNSLLLHYINCVRDEPVLLRFYYWLSQTLQEECIWYKVNNYEHGKEFTNFLDTIIRAECFLQEGFYSCEAFLYKSLPLWDGLCCRSQFLQLVSWIPFSSFSEVKPLLFDHLAQLFFTSTIYFKCSVLQSLKELLQNWLLWLSMDIHMKPVTNSPLETTLGGSMNSVSKLIHYVGWLSTTAMRLESNNTFLLHFILDFYEKVCDIYINYNLPLVVLFPPGIFYSALLSLDTSILNQLCFIMHRYRKNLTAAKKNELVQKTKSEFNFSSKTYQEFNHYLTSMVGCLWTSKPFGKGIYIDPEILEKTGVAEYKNSLNVVHHPSFLSYAVSFLLQESPEERTVNVSSIRGKKWSWYLDYLFSQGLQGLKLFIRSSVHHSSIPRAEGINCNNQY.

Residues 1–60 are disordered; the sequence is MSPQKRVKNVQAQNRTSQGSSSFQTTLSAWKVKQDPSNSKNISKHGQNNPVGDYEHADDQ. Polar residues-rich tracts occupy residues 10 to 28 and 35 to 50; these read VQAQNRTSQGSSSFQTTLS and DPSNSKNISKHGQNNP.

This sequence belongs to the CENP-I/CTF3 family. In terms of assembly, component of the CENPA-CAD complex, composed of CENPI, CENPK, CENPL, CENPO, CENPP, CENPQ, CENPR and CENPS. The CENPA-CAD complex interacts with the CENPA-NAC complex, at least composed of CENPA, CENPC, CENPH, CENPM, CENPN, CENPT and CENPU. Interacts with SENP6. In terms of processing, sumoylated. Sumoylated form can be polyubiquitinated by RNF4, leading to its degradation. Desumoylation by SENP6 prevents its degradation.

The protein localises to the nucleus. It is found in the chromosome. Its subcellular location is the centromere. Its function is as follows. Component of the CENPA-CAD (nucleosome distal) complex, a complex recruited to centromeres which is involved in assembly of kinetochore proteins, mitotic progression and chromosome segregation. May be involved in incorporation of newly synthesized CENPA into centromeres via its interaction with the CENPA-NAC complex. Required for the localization of CENPF, MAD1L1 and MAD2 (MAD2L1 or MAD2L2) to kinetochores. Involved in the response of gonadal tissues to follicle-stimulating hormone. This chain is Centromere protein I (CENPI), found in Homo sapiens (Human).